A 63-amino-acid polypeptide reads, in one-letter code: Large ribosomal subunit protein bL35 (63 aa).

Over residues 1 to 15 (MPKIKTHRGAAKRFK) the composition is skewed to basic residues. The disordered stretch occupies residues 1–26 (MPKIKTHRGAAKRFKQTAGGKWKGSH).

Belongs to the bacterial ribosomal protein bL35 family.

This chain is Large ribosomal subunit protein bL35, found in Pelotomaculum thermopropionicum (strain DSM 13744 / JCM 10971 / SI).